Here is a 139-residue protein sequence, read N- to C-terminus: ATP synthase epsilon chain (139 aa).

It belongs to the ATPase epsilon chain family. F-type ATPases have 2 components, CF(1) - the catalytic core - and CF(0) - the membrane proton channel. CF(1) has five subunits: alpha(3), beta(3), gamma(1), delta(1), epsilon(1). CF(0) has three main subunits: a, b and c.

The protein resides in the cell membrane. In terms of biological role, produces ATP from ADP in the presence of a proton gradient across the membrane. The sequence is that of ATP synthase epsilon chain from Roseiflexus sp. (strain RS-1).